We begin with the raw amino-acid sequence, 404 residues long: Cysteine desulfurase IscS (404 aa).

Pyridoxal 5'-phosphate-binding positions include 75 to 76, Asn-155, Gln-183, and 203 to 205; these read AT and SSH. Residue Lys-206 is modified to N6-(pyridoxal phosphate)lysine. Thr-243 is a pyridoxal 5'-phosphate binding site. The Cysteine persulfide intermediate role is filled by Cys-328. Cys-328 serves as a coordination point for [2Fe-2S] cluster.

The protein belongs to the class-V pyridoxal-phosphate-dependent aminotransferase family. NifS/IscS subfamily. In terms of assembly, homodimer. Forms a heterotetramer with IscU, interacts with other sulfur acceptors. The cofactor is pyridoxal 5'-phosphate.

Its subcellular location is the cytoplasm. The catalysed reaction is (sulfur carrier)-H + L-cysteine = (sulfur carrier)-SH + L-alanine. It participates in cofactor biosynthesis; iron-sulfur cluster biosynthesis. Its function is as follows. Master enzyme that delivers sulfur to a number of partners involved in Fe-S cluster assembly, tRNA modification or cofactor biosynthesis. Catalyzes the removal of elemental sulfur atoms from cysteine to produce alanine. Functions as a sulfur delivery protein for Fe-S cluster synthesis onto IscU, an Fe-S scaffold assembly protein, as well as other S acceptor proteins. The sequence is that of Cysteine desulfurase IscS from Histophilus somni (strain 2336) (Haemophilus somnus).